A 96-amino-acid chain; its full sequence is Venom protein 3.1 (96 aa).

The first 25 residues, methionine 1–alanine 25, serve as a signal peptide directing secretion. The tract at residues glutamate 45–isoleucine 84 is disordered.

Belongs to the non-disulfide-bridged peptide (NDBP) superfamily. As to expression, expressed by the venom gland.

The protein localises to the secreted. The sequence is that of Venom protein 3.1 from Lychas mucronatus (Chinese swimming scorpion).